A 388-amino-acid polypeptide reads, in one-letter code: METKLTTVGVIGGGQLAWMMAQEAPRLGLKLAVQTPGESDPAVALADKVVLTAIADGEGTRELAEHCGVITFENEFVDLPSLEKLAQQGITFHPRLDALAPLLDKWEQRHFLQNLGLPVPDFWALESLPAQLPDFPWVLKARRHGYDGQGTQIINSPADLPDLSKAPPGSWMVESFVPYERELAVIGVRNARGEMEIYPVVETKQIDQVCRWVVAPAPIDAAIAATAQDYCRRILNHLDYVGILAIEFFLLPASTQTPTPEQRLLVNELAPRTHNSGHFSLDACHTSQFALQLQAVTGQTLGSSALRCGQAVMVNLLGYEVSTGDYQQQLDKLAALPHSHVHWYGKGDCRPGRKLGHVTLLNPDVESEPSTAWAEDLVKQVEAIWYPD.

ATP-binding positions include Lys-105, Lys-140, 174–177 (ESFV), Glu-182, and 267–268 (NE). An ATP-grasp domain is found at 109-297 (RHFLQNLGLP…QFALQLQAVT (189 aa)).

It belongs to the PurK/PurT family. As to quaternary structure, homodimer.

The catalysed reaction is 5-amino-1-(5-phospho-beta-D-ribosyl)imidazole + hydrogencarbonate + ATP = 5-carboxyamino-1-(5-phospho-D-ribosyl)imidazole + ADP + phosphate + 2 H(+). Its pathway is purine metabolism; IMP biosynthesis via de novo pathway; 5-amino-1-(5-phospho-D-ribosyl)imidazole-4-carboxylate from 5-amino-1-(5-phospho-D-ribosyl)imidazole (N5-CAIR route): step 1/2. Functionally, catalyzes the ATP-dependent conversion of 5-aminoimidazole ribonucleotide (AIR) and HCO(3)(-) to N5-carboxyaminoimidazole ribonucleotide (N5-CAIR). The chain is N5-carboxyaminoimidazole ribonucleotide synthase from Synechocystis sp. (strain ATCC 27184 / PCC 6803 / Kazusa).